The chain runs to 186 residues: ATP synthase subunit b, chloroplastic (186 aa).

A helical transmembrane segment spans residues 26-44; it reads ILETNLINLGVVIGTLLYF.

The protein belongs to the ATPase B chain family. As to quaternary structure, F-type ATPases have 2 components, F(1) - the catalytic core - and F(0) - the membrane proton channel. F(1) has five subunits: alpha(3), beta(3), gamma(1), delta(1), epsilon(1). F(0) has four main subunits: a(1), b(1), b'(1) and c(10-14). The alpha and beta chains form an alternating ring which encloses part of the gamma chain. F(1) is attached to F(0) by a central stalk formed by the gamma and epsilon chains, while a peripheral stalk is formed by the delta, b and b' chains.

It is found in the plastid. The protein resides in the chloroplast thylakoid membrane. F(1)F(0) ATP synthase produces ATP from ADP in the presence of a proton or sodium gradient. F-type ATPases consist of two structural domains, F(1) containing the extramembraneous catalytic core and F(0) containing the membrane proton channel, linked together by a central stalk and a peripheral stalk. During catalysis, ATP synthesis in the catalytic domain of F(1) is coupled via a rotary mechanism of the central stalk subunits to proton translocation. Functionally, component of the F(0) channel, it forms part of the peripheral stalk, linking F(1) to F(0). This chain is ATP synthase subunit b, chloroplastic, found in Chara vulgaris (Common stonewort).